The chain runs to 341 residues: Heat-inducible transcription repressor HrcA (341 aa).

It belongs to the HrcA family.

Functionally, negative regulator of class I heat shock genes (grpE-dnaK-dnaJ and groELS operons). Prevents heat-shock induction of these operons. The protein is Heat-inducible transcription repressor HrcA of Symbiobacterium thermophilum (strain DSM 24528 / JCM 14929 / IAM 14863 / T).